The sequence spans 179 residues: MKYIEVDEELYRLIASKTERIGESASEILRRLLGLEVEASATQEKDEPEVISQPGLEETADVEDKPRFIDLHSSINKEELAAAKGAVGRFLFILEAVYLASPEQFAQVLKIKGRDRLYFATSKQSLLKASKSANPKEIGQSGYWVTTNNNTAKKRTILTEVLHQYGTVEAQIESITRNI.

The interaction with DNA stretch occupies residues 86–87 (AV).

Belongs to the SeqA family. In terms of assembly, homodimer. Polymerizes to form helical filaments.

The protein resides in the cytoplasm. Functionally, negative regulator of replication initiation, which contributes to regulation of DNA replication and ensures that replication initiation occurs exactly once per chromosome per cell cycle. Binds to pairs of hemimethylated GATC sequences in the oriC region, thus preventing assembly of replication proteins and re-initiation at newly replicated origins. Repression is relieved when the region becomes fully methylated. The protein is Negative modulator of initiation of replication of Shewanella woodyi (strain ATCC 51908 / MS32).